The following is a 1088-amino-acid chain: RNA-directed RNA polymerase (1088 aa).

One can recognise a RdRp catalytic domain in the interval 501–687; that stretch reads LSYGDVTRFL…AKRYLAGGKI (187 aa).

The protein belongs to the reoviridae RNA-directed RNA polymerase family. As to quaternary structure, interacts with VP3 (Potential). Interacts with VP2; this interaction activates VP1. Interacts with NSP5; this interaction is probably necessary for the formation of functional virus factories. Interacts with NSP2; this interaction is weak. Mg(2+) serves as cofactor.

It localises to the virion. It carries out the reaction RNA(n) + a ribonucleoside 5'-triphosphate = RNA(n+1) + diphosphate. RNA-directed RNA polymerase that is involved in both transcription and genome replication. Together with VP3 capping enzyme, forms an enzyme complex positioned near the channels situated at each of the five-fold vertices of the core. Following infection, the outermost layer of the virus is lost, leaving a double-layered particle (DLP) made up of the core and VP6 shell. VP1 then catalyzes the transcription of fully conservative plus-strand genomic RNAs that are extruded through the DLP's channels into the cytoplasm where they function as mRNAs for translation of viral proteins. One copy of each of the viral (+)RNAs is also recruited during core assembly, together with newly synthesized polymerase complexes and VP2. The polymerase of these novo-formed particles catalyzes the synthesis of complementary minus-strands leading to dsRNA formation. To do so, the polymerase specifically recognizes and binds 4 bases 5'-UGUG-3' in the conserved 3'-sequence of plus-strand RNA templates. VP2 presumably activates the autoinhibited VP1-RNA complex to coordinate packaging and genome replication. Once dsRNA synthesis is complete, the polymerase switches to the transcriptional mode, thus providing secondary transcription. This Rotavirus A (strain RVA/Human/Japan/KU/1995/G1P1A[8]) (RV-A) protein is RNA-directed RNA polymerase.